A 122-amino-acid chain; its full sequence is Large ribosomal subunit protein uL14 (122 aa).

It belongs to the universal ribosomal protein uL14 family. As to quaternary structure, part of the 50S ribosomal subunit. Forms a cluster with proteins L3 and L19. In the 70S ribosome, L14 and L19 interact and together make contacts with the 16S rRNA in bridges B5 and B8.

Functionally, binds to 23S rRNA. Forms part of two intersubunit bridges in the 70S ribosome. This chain is Large ribosomal subunit protein uL14, found in Ruminiclostridium cellulolyticum (strain ATCC 35319 / DSM 5812 / JCM 6584 / H10) (Clostridium cellulolyticum).